The primary structure comprises 785 residues: Uncoating factor OPG117 (785 aa).

Residue D170 is part of the active site. Positions 342–469 are primase; sequence TERGDHIVWI…ELMNIINDIQ (128 aa). The region spanning 477-639 is the SF3 helicase domain; the sequence is KNRELYEKTL…FSQPSGREAA (163 aa). 503 to 510 contacts ATP; sequence GETATGKS.

The protein belongs to the orthopoxvirus OPG117 family. As to quaternary structure, homomultimer; hexamer. Interacts with OPG148.

It is found in the host cytoplasm. Functionally, multifunctional protein required for genome uncoating and replication. Major viral uncoating protein that is required for the release of the viral genome from incoming viral cores containing the viral DNA genome. Possesses an ATPase activity that is required for hexamerization and uncoating. This Bos taurus (Bovine) protein is Uncoating factor OPG117 (OPG117).